A 702-amino-acid chain; its full sequence is MPALAFVDTPIDTFSSIFTPSSVSTAVVDGSCHWSPSLSSSLYRIDGWGAPYFAANSSGNISVRPHGSNTLPHQDIDLMKVVKKVTDPSGLGLQLPLIVRFPDVLKNRLECLQSAFDYAIQSQGYDSHYQGVYPVKCNQDRFIIEDIVEFGSGFRFGLEAGSKPEILLAMSCLCKGNPEAFLVCNGFKDSEYISLALFGRKLELNTVIVLEQEEELDLVIDLSQKMNVRPVIGLRAKLRTKHSGHFGSTSGEKGKFGLTTVQILRVVRKLSQVGMLDCLQLLHFHIGSQIPSTALLSDGVAEAAQLYCELVRLGAHMKVIDIGGGLGIDYDGSKSGESDLSVAYSLEEYAAAVVASVRFVCDQKSVKHPVICSESGRAIVSHHSVLIFEAVSAGQQHETPTDHQFMLEGYSEEVRGDYENLYGAAMRGDRESCLLYVDQLKQRCVEGFKEGSLGIEQLAGVDGLCEWVIKAIGASDPVLTYHVNLSVFTSIPDFWGIDQLFPIVPIHKLDQRPAARGILSDLTCDSDGKINKFIGGESSLPLHEMDNNGCSGGRYYLGMFLGGAYEEALGGVHNLFGGPSVVRVLQSDGPHGFAVTRAVMGQSSADVLRAMQHEPELMFQTLKHRAEEPRNNNNKACGDKGNDKLVVASCLAKSFNNMPYLSMETSTNALTAAVNNLGVYYCDEAAAGGGGKGKDENWSYFG.

Residues 1–52 (MPALAFVDTPIDTFSSIFTPSSVSTAVVDGSCHWSPSLSSSLYRIDGWGAPY) constitute a chloroplast transit peptide. The residue at position 136 (K136) is an N6-(pyridoxal phosphate)lysine. Pyridoxal 5'-phosphate is bound by residues S288, G325, and 374–377 (ESGR). 320-330 (IDIGGGLGIDY) lines the substrate pocket. 436–437 (YV) provides a ligand contact to substrate. Catalysis depends on C524, which acts as the Proton donor; shared with dimeric partner. D525 contacts substrate. Y565 is a binding site for pyridoxal 5'-phosphate.

Belongs to the Orn/Lys/Arg decarboxylase class-II family. SpeA subfamily. Homodimer. Only the dimer is catalytically active, as the active sites are constructed of residues from both monomers. May form a head-to-tail homodimer. Homodimer and heterodimer with ADC2. It depends on pyridoxal 5'-phosphate as a cofactor. Requires Mg(2+) as cofactor.

The protein resides in the plastid. Its subcellular location is the chloroplast. It is found in the cytoplasm. The protein localises to the cytosol. The catalysed reaction is L-arginine + H(+) = agmatine + CO2. The protein operates within amine and polyamine biosynthesis; agmatine biosynthesis; agmatine from L-arginine: step 1/1. Functionally, required for the biosynthesis of putrescine. Catalyzes the first step of polyamine (PA) biosynthesis to produce putrescine from arginine. Is a minor contributor to basal arginine decarboxylase (ADC) activity and putrescine biosynthesis. Accumulation of putrescine plays a positive role in freezing tolerance. Production of polyamines is essential for normal seed development. Controls PA homeostasis which is crucial for normal plant growth and development. The protein is Arginine decarboxylase 1, chloroplastic of Arabidopsis thaliana (Mouse-ear cress).